A 302-amino-acid chain; its full sequence is 4-diphosphocytidyl-2-C-methyl-D-erythritol kinase (302 aa).

Residue lysine 32 is part of the active site. ATP is bound at residue 115–125; the sequence is PMGGGVGGGSS. The active site involves aspartate 157.

The protein belongs to the GHMP kinase family. IspE subfamily.

It carries out the reaction 4-CDP-2-C-methyl-D-erythritol + ATP = 4-CDP-2-C-methyl-D-erythritol 2-phosphate + ADP + H(+). It participates in isoprenoid biosynthesis; isopentenyl diphosphate biosynthesis via DXP pathway; isopentenyl diphosphate from 1-deoxy-D-xylulose 5-phosphate: step 3/6. Its function is as follows. Catalyzes the phosphorylation of the position 2 hydroxy group of 4-diphosphocytidyl-2C-methyl-D-erythritol. In Actinobacillus succinogenes (strain ATCC 55618 / DSM 22257 / CCUG 43843 / 130Z), this protein is 4-diphosphocytidyl-2-C-methyl-D-erythritol kinase.